The chain runs to 238 residues: Pyridoxine 5'-phosphate synthase (238 aa).

Residue N9 coordinates 3-amino-2-oxopropyl phosphate. A 1-deoxy-D-xylulose 5-phosphate-binding site is contributed by 11–12; that stretch reads DH. R20 is a binding site for 3-amino-2-oxopropyl phosphate. The Proton acceptor role is filled by H45. Residues R47 and H52 each contribute to the 1-deoxy-D-xylulose 5-phosphate site. The active-site Proton acceptor is the E72. T102 contacts 1-deoxy-D-xylulose 5-phosphate. H189 functions as the Proton donor in the catalytic mechanism. 3-amino-2-oxopropyl phosphate is bound by residues G190 and 211–212; that span reads GH.

Belongs to the PNP synthase family. Homooctamer; tetramer of dimers.

It is found in the cytoplasm. It catalyses the reaction 3-amino-2-oxopropyl phosphate + 1-deoxy-D-xylulose 5-phosphate = pyridoxine 5'-phosphate + phosphate + 2 H2O + H(+). It functions in the pathway cofactor biosynthesis; pyridoxine 5'-phosphate biosynthesis; pyridoxine 5'-phosphate from D-erythrose 4-phosphate: step 5/5. Catalyzes the complicated ring closure reaction between the two acyclic compounds 1-deoxy-D-xylulose-5-phosphate (DXP) and 3-amino-2-oxopropyl phosphate (1-amino-acetone-3-phosphate or AAP) to form pyridoxine 5'-phosphate (PNP) and inorganic phosphate. This chain is Pyridoxine 5'-phosphate synthase, found in Ehrlichia ruminantium (strain Gardel).